The chain runs to 634 residues: Endoribonuclease rege-1 (634 aa).

Disordered regions lie at residues 1-33, 90-113, and 156-223; these read MDST…STPH, SHPS…APMI, and KMGL…NPDP. Basic and acidic residues predominate over residues 97-106; sequence ESSDPSKIDD. Low complexity-rich tracts occupy residues 182–194 and 201–217; these read SSAS…SSSS and SVSI…STPS. The region spanning 225–377 is the RNase NYN domain; that stretch reads LRAVVVDGSN…PSGRHGPRIE (153 aa). Position 314 (aspartate 314) interacts with Mg(2+). A C3H1-type zinc finger spans residues 387-412; it reads SSNPLVCPYARKCTYGNKCKFYHPER.

The protein belongs to the ZC3H12 family. Mg(2+) is required as a cofactor. In terms of tissue distribution, expressed in the intestinal cells adjacent to the pharynx.

It is found in the cytoplasm. Functionally, endonuclease which binds to the 3'UTR of target mRNAs and induces degradation of the transcript. Acts together with rle-1 to repress the expression of the transcription factor ets-4 by binding to the conserved ADE (alternate decay element) and RCE (REGE-1 cleavage element) stem loop structure in its 3'UTR, which controls the expression of genes in the IIS and TORC1 pathways, including those involved in lipid metabolism and autophagosome formation. May play a role in the clearance of apoptotic cell corpses. This chain is Endoribonuclease rege-1, found in Caenorhabditis elegans.